The sequence spans 569 residues: Sulfite reductase [NADPH] hemoprotein beta-component (569 aa).

[4Fe-4S] cluster is bound by residues Cys-433, Cys-439, Cys-478, and Cys-482. Siroheme is bound at residue Cys-482.

The protein belongs to the nitrite and sulfite reductase 4Fe-4S domain family. As to quaternary structure, alpha(8)-beta(8). The alpha component is a flavoprotein, the beta component is a hemoprotein. It depends on siroheme as a cofactor. [4Fe-4S] cluster serves as cofactor.

It carries out the reaction hydrogen sulfide + 3 NADP(+) + 3 H2O = sulfite + 3 NADPH + 4 H(+). It functions in the pathway sulfur metabolism; hydrogen sulfide biosynthesis; hydrogen sulfide from sulfite (NADPH route): step 1/1. Component of the sulfite reductase complex that catalyzes the 6-electron reduction of sulfite to sulfide. This is one of several activities required for the biosynthesis of L-cysteine from sulfate. This Buchnera aphidicola subsp. Acyrthosiphon pisum (strain Tuc7) protein is Sulfite reductase [NADPH] hemoprotein beta-component.